Here is a 393-residue protein sequence, read N- to C-terminus: Putative acid--amine ligase HI_0929 (393 aa).

103–105 (RFD) provides a ligand contact to ATP. Mg(2+) contacts are provided by D105, E117, and N119. ATP is bound by residues K267, K303, G310, Q343, and 378-380 (AVT).

This sequence belongs to the glutathionylspermidine synthase preATP-grasp family.

May be a ligase forming an amide bond. Shows ATPase activity. The chain is Putative acid--amine ligase HI_0929 from Haemophilus influenzae (strain ATCC 51907 / DSM 11121 / KW20 / Rd).